The following is a 211-amino-acid chain: Imidazole glycerol phosphate synthase subunit HisH (211 aa).

Residues 3 to 211 enclose the Glutamine amidotransferase type-1 domain; that stretch reads VVAVIDYEMG…VSQVREKIAA (209 aa). Cys-81 serves as the catalytic Nucleophile. Active-site residues include His-186 and Glu-188.

In terms of assembly, heterodimer of HisH and HisF.

It is found in the cytoplasm. The catalysed reaction is 5-[(5-phospho-1-deoxy-D-ribulos-1-ylimino)methylamino]-1-(5-phospho-beta-D-ribosyl)imidazole-4-carboxamide + L-glutamine = D-erythro-1-(imidazol-4-yl)glycerol 3-phosphate + 5-amino-1-(5-phospho-beta-D-ribosyl)imidazole-4-carboxamide + L-glutamate + H(+). It catalyses the reaction L-glutamine + H2O = L-glutamate + NH4(+). It participates in amino-acid biosynthesis; L-histidine biosynthesis; L-histidine from 5-phospho-alpha-D-ribose 1-diphosphate: step 5/9. In terms of biological role, IGPS catalyzes the conversion of PRFAR and glutamine to IGP, AICAR and glutamate. The HisH subunit catalyzes the hydrolysis of glutamine to glutamate and ammonia as part of the synthesis of IGP and AICAR. The resulting ammonia molecule is channeled to the active site of HisF. This chain is Imidazole glycerol phosphate synthase subunit HisH, found in Nostoc sp. (strain PCC 7120 / SAG 25.82 / UTEX 2576).